Consider the following 248-residue polypeptide: Homeobox-leucine zipper protein HOX15 (248 aa).

Residues 1 to 44 (MAQDDEDVGLALGLSLGSGGHRRQRESRDEAPSSAAASLLTLRL) are disordered. Positions 32-44 (PSSAAASLLTLRL) are enriched in low complexity. Positions 91 to 150 (NSRKKLRLSKEQSALLEDRFKEHSTLNPKQKVALAKQLNLRPRQVEVWFQNRRARTKLKQ) form a DNA-binding region, homeobox. Residues 149–193 (KQTEVDCELLKRCCETLTEENRRLHRELQQLRALTHSTAAGFFMA) form a leucine-zipper region. The disordered stretch occupies residues 223-248 (PTAAADRTNKPTAPHLFSPFAKSAAC).

Belongs to the HD-ZIP homeobox family. Class II subfamily. In terms of tissue distribution, expressed in seedlings, stems, leaf blades and panicles.

It is found in the nucleus. Probable transcription factor. This Oryza sativa subsp. indica (Rice) protein is Homeobox-leucine zipper protein HOX15 (HOX15).